The following is a 266-amino-acid chain: Ubiquinone biosynthesis protein COQ4 homolog, mitochondrial (266 aa).

Residues His-169, Asp-170, His-173, and Glu-185 each coordinate Zn(2+).

Belongs to the COQ4 family. Component of a multi-subunit COQ enzyme complex. Zn(2+) serves as cofactor.

It localises to the mitochondrion inner membrane. It carries out the reaction a 4-hydroxy-3-methoxy-5-(all-trans-polyprenyl)benzoate + H(+) = a 2-methoxy-6-(all-trans-polyprenyl)phenol + CO2. The protein operates within cofactor biosynthesis; ubiquinone biosynthesis. Functionally, lyase that catalyzes the C1-decarboxylation of 4-hydroxy-3-methoxy-5-(all-trans-polyprenyl)benzoic acid into 2-methoxy-6-(all-trans-polyprenyl)phenol during ubiquinone biosynthesis. This Drosophila ananassae (Fruit fly) protein is Ubiquinone biosynthesis protein COQ4 homolog, mitochondrial.